The sequence spans 226 residues: Ribonuclease S-7 (226 aa).

Positions 1 to 27 (MGITGMIYIVTMVFSLIVLILSSSTVG) are cleaved as a signal peptide. RNA is bound at residue Gln36. A disulfide bond links Cys42 and Cys49. His60 contacts RNA. His60 serves as the catalytic Proton donor. N-linked (GlcNAc...) asparagine; alternate glycans are attached at residues Asn74 and Asn77. Cys75 and Cys119 are oxidised to a cystine. RNA-binding positions include 98–99 (NV), Phe108, 111–112 (KQ), and 115–116 (KH). Gln112 is an active-site residue. His116 functions as the Proton acceptor in the catalytic mechanism. Residues Asn126, Asn144, and Asn172 are each glycosylated (N-linked (GlcNAc...) asparagine). 2 disulfides stabilise this stretch: Cys183–Cys220 and Cys198–Cys209.

It belongs to the RNase T2 family. Post-translationally, the N-glycans attached at Asn-74 and Asn-77 consist of either monosaccharide (GlcNAc) or disaccharide (GlcNAc-GlcNAc) that could not be distinguished. The N-glycan at Asn-144 contains mannose and xylose, and at Asn-126 contains mannose, xylose and fucose. The N-glycan at Asn-172 consists of disaccharide (GlcNAc-GlcNAc).

It carries out the reaction a ribonucleotidyl-ribonucleotide-RNA + H2O = a 3'-end 3'-phospho-ribonucleotide-RNA + a 5'-end dephospho-ribonucleoside-RNA + H(+). Self-incompatibility (SI) is the inherited ability of a flowering plant to prevent self-fertilization by discriminating between self and non-self pollen during pollination. In many species, self-incompatibility is controlled by the single, multiallelic locus S. The sequence is that of Ribonuclease S-7 from Pyrus pyrifolia (Chinese pear).